A 239-amino-acid chain; its full sequence is tRNA pseudouridine synthase C (239 aa).

Asp-54 is an active-site residue.

The protein belongs to the pseudouridine synthase RluA family.

The catalysed reaction is uridine(65) in tRNA = pseudouridine(65) in tRNA. Functionally, responsible for synthesis of pseudouridine from uracil-65 in transfer RNAs. The sequence is that of tRNA pseudouridine synthase C (truC) from Haemophilus influenzae (strain ATCC 51907 / DSM 11121 / KW20 / Rd).